We begin with the raw amino-acid sequence, 456 residues long: Glutathione reductase (456 aa).

Residues Ser-14, Gly-15, Glu-34, Thr-41, Cys-42, and Lys-50 each contribute to the FAD site. Ser-14 lines the glutathione pocket. Cys-42 and Cys-47 are oxidised to a cystine. Tyr-99 provides a ligand contact to glutathione. Position 115 (Gly-115) interacts with FAD. NADP(+)-binding residues include Ala-180, Ile-183, Glu-186, Arg-203, Arg-209, and Gly-267. Asp-308 lines the FAD pocket. Position 315 (Glu-315) interacts with NADP(+). Residue Thr-317 coordinates FAD. Arg-325 provides a ligand contact to glutathione. An NADP(+)-binding site is contributed by Val-348. His-445 contributes to the FAD binding site. The Proton acceptor role is filled by His-445.

The protein belongs to the class-I pyridine nucleotide-disulfide oxidoreductase family. In terms of assembly, homodimer. Requires FAD as cofactor.

The protein localises to the cytoplasm. It carries out the reaction 2 glutathione + NADP(+) = glutathione disulfide + NADPH + H(+). Catalyzes the reduction of glutathione disulfide (GSSG) to reduced glutathione (GSH). Constitutes the major mechanism to maintain a high GSH:GSSG ratio in the cytosol. In Haemophilus influenzae (strain ATCC 51907 / DSM 11121 / KW20 / Rd), this protein is Glutathione reductase (gor).